The chain runs to 227 residues: NAD(P)H-quinone oxidoreductase subunit K, chloroplastic (227 aa).

[4Fe-4S] cluster contacts are provided by Cys43, Cys44, Cys108, and Cys139.

It belongs to the complex I 20 kDa subunit family. In terms of assembly, NDH is composed of at least 16 different subunits, 5 of which are encoded in the nucleus. The cofactor is [4Fe-4S] cluster.

It localises to the plastid. Its subcellular location is the chloroplast thylakoid membrane. The enzyme catalyses a plastoquinone + NADH + (n+1) H(+)(in) = a plastoquinol + NAD(+) + n H(+)(out). It catalyses the reaction a plastoquinone + NADPH + (n+1) H(+)(in) = a plastoquinol + NADP(+) + n H(+)(out). In terms of biological role, NDH shuttles electrons from NAD(P)H:plastoquinone, via FMN and iron-sulfur (Fe-S) centers, to quinones in the photosynthetic chain and possibly in a chloroplast respiratory chain. It has NADH- and deamino-NADH-specific dehydrogenase activity, using ferricyanide or quinones as acceptors. The immediate electron acceptor for the enzyme in this species is believed to be plastoquinone. Couples the redox reaction to proton translocation, and thus conserves the redox energy in a proton gradient. In Pisum sativum (Garden pea), this protein is NAD(P)H-quinone oxidoreductase subunit K, chloroplastic.